Reading from the N-terminus, the 357-residue chain is NmrA-like family domain-containing oxidoreductase notA' (357 aa).

NADP(+) contacts are provided by residues 13-18, 39-43, 60-61, 81-83, K140, and 164-167; these read GATGAQ, RKPES, DG, TNS, and YMDV.

The protein belongs to the NmrA-type oxidoreductase family.

Its function is as follows. NmrA-like family domain-containing oxidoreductase; part of the gene cluster that mediates the biosynthesis of notoamide, a fungal indole alkaloid that belongs to a family of natural products containing a characteristic bicyclo[2.2.2]diazaoctane core. The first step of notoamide biosynthesis involves coupling of L-proline and L-tryptophan by the bimodular NRPS notE', to produce cyclo-L-tryptophan-L-proline called brevianamide F. The reverse prenyltransferase notF' then acts as a deoxybrevianamide E synthase and converts brevianamide F to deoxybrevianamide E via reverse prenylation at C-2 of the indole ring leading to the bicyclo[2.2.2]diazaoctane core. Deoxybrevianamide E is further hydroxylated at C-6 of the indole ring, likely catalyzed by the cytochrome P450 monooxygenase notG', to yield 6-hydroxy-deoxybrevianamide E. 6-hydroxy-deoxybrevianamide E is a specific substrate of the prenyltransferase notC' for normal prenylation at C-7 to produce 6-hydroxy-7-prenyl-deoxybrevianamide, also called notoamide S. As the proposed pivotal branching point in notoamide biosynthesis, notoamide S can be diverted to notoamide E through an oxidative pyran ring closure putatively catalyzed by either notH' cytochrome P450 monooxygenase or the notD' FAD-linked oxidoreductase. This step would be followed by an indole 2,3-epoxidation-initiated pinacol-like rearrangement catalyzed by the notB' FAD-dependent monooxygenase leading to the formation of notoamide C and notoamide D. On the other hand notoamide S is converted to notoamide T by notH' (or notD'), a bifunctional oxidase that also functions as the intramolecular Diels-Alderase responsible for generation of (-)-notoamide T. To generate antipodal (+)-notoaminide T, notH (or notD) in Aspergillus strain MF297-2 is expected to catalyze a Diels-Alder reaction leading to the opposite stereochemistry. The remaining oxidoreductase notD' (or notH') likely catalyzes the oxidative pyran ring formation to yield (-)-stephacidin A. The FAD-dependent monooxygenase notI' is highly similar to notB' and is predicted to catalyze a similar conversion from (-)-stephacidin A to (+)-notoamide B via the 2,3-epoxidation of (-)-stephacidin A followed by a pinacol-type rearrangement. Finally, it remains unclear which enzyme could be responsible for the final hydroxylation steps leading to notoamide A and sclerotiamide. The protein is NmrA-like family domain-containing oxidoreductase notA' of Aspergillus versicolor.